The primary structure comprises 890 residues: Calcium-transporting ATPase (890 aa).

The Cytoplasmic segment spans residues Met1 to Ser47. A helical transmembrane segment spans residues Ala48–Thr68. Residues Leu69–Val78 are Extracellular-facing. The chain crosses the membrane as a helical span at residues Asp79–Arg99. The Cytoplasmic segment spans residues Arg100–Leu238. The helical transmembrane segment at Glu239 to Ala258 threads the bilayer. Over Val259–Met270 the chain is Extracellular. The helical transmembrane segment at Phe271–Ala288 threads the bilayer. Residues Val279, Ala280, Ile282, and Glu284 each contribute to the Ca(2+) site. Residues Ile289–Ile688 lie on the Cytoplasmic side of the membrane. The active-site 4-aspartylphosphate intermediate is the Asp326. Mg(2+)-binding residues include Asp633 and Asp637. Residues Arg689 to Phe708 traverse the membrane as a helical segment. Asn699 and Glu702 together coordinate Ca(2+). The Extracellular portion of the chain corresponds to Ala709 to Leu718. Residues Val719–Gly739 form a helical membrane-spanning segment. Ca(2+) contacts are provided by Asn727, Thr730, and Asp731. The Cytoplasmic portion of the chain corresponds to Met740–Val759. A helical transmembrane segment spans residues Phe760–Ala782. The Extracellular segment spans residues Phe783 to Gln798. The chain crosses the membrane as a helical span at residues Thr799–Ser818. The Cytoplasmic segment spans residues Glu819–Asn830. Residues Leu831–Tyr849 form a helical membrane-spanning segment. Over Tyr850–Pro864 the chain is Extracellular. The helical transmembrane segment at Gly865 to Leu885 threads the bilayer. At Leu886–Lys890 the chain is on the cytoplasmic side.

Belongs to the cation transport ATPase (P-type) (TC 3.A.3) family. Type IIA subfamily. Phosphorylated in a Ca(2+)-dependent manner starting 4 hours after shifting to sporulation medium.

It localises to the cell membrane. The catalysed reaction is Ca(2+)(in) + ATP + H2O = Ca(2+)(out) + ADP + phosphate + H(+). Its function is as follows. This magnesium-dependent enzyme catalyzes the hydrolysis of ATP coupled with the transport of calcium. The sequence is that of Calcium-transporting ATPase (yloB) from Bacillus subtilis (strain 168).